Reading from the N-terminus, the 533-residue chain is D-2-hydroxyglutarate dehydrogenase, mitochondrial (533 aa).

A mitochondrion-targeting transit peptide spans 1-55 (MGLFQKCSRLSLRSSYMWSVCPQYSIAVTARETPDRALIVHWTQHRDVHNSRRLG). Residues 107–286 (VQGSSDVLLR…TAVSILCPRK (180 aa)) form the FAD-binding PCMH-type domain. (R)-2-hydroxyglutarate is bound by residues arginine 397, threonine 401, and lysine 412. Arginine 397 contacts (R)-lactate. Residues arginine 397, threonine 401, and lysine 412 each contribute to the (R)-malate site. Histidine 445 and histidine 452 together coordinate Zn(2+). A (R)-2-hydroxyglutarate-binding site is contributed by asparagine 454. Glutamate 486 is a Zn(2+) binding site. (R)-2-hydroxyglutarate is bound at residue histidine 487. Histidine 487 serves as a coordination point for (R)-lactate. Histidine 487 contributes to the (R)-malate binding site.

The protein belongs to the FAD-binding oxidoreductase/transferase type 4 family. FAD serves as cofactor.

It is found in the mitochondrion. It carries out the reaction (R)-2-hydroxyglutarate + A = 2-oxoglutarate + AH2. The enzyme catalyses (R)-malate + A = oxaloacetate + AH2. Functionally, catalyzes the oxidation of D-2-hydroxyglutarate (D-2-HG) to alpha-ketoglutarate. Also catalyzes the oxidation of other D-2-hydroxyacids, such as D-malate (D-MAL) and D-lactate (D-LAC). Exhibits high activities towards D-2-HG and D-MAL but a very weak activity towards D-LAC. This Danio rerio (Zebrafish) protein is D-2-hydroxyglutarate dehydrogenase, mitochondrial (d2hgdh).